The primary structure comprises 96 residues: Small ribosomal subunit protein bS6 (96 aa).

Belongs to the bacterial ribosomal protein bS6 family.

Its function is as follows. Binds together with bS18 to 16S ribosomal RNA. This chain is Small ribosomal subunit protein bS6, found in Mycobacteroides abscessus (strain ATCC 19977 / DSM 44196 / CCUG 20993 / CIP 104536 / JCM 13569 / NCTC 13031 / TMC 1543 / L948) (Mycobacterium abscessus).